A 610-amino-acid chain; its full sequence is ATP-dependent zinc metalloprotease FtsH (610 aa).

The Cytoplasmic segment spans residues 1-5 (MNRSN). Residues 6–26 (IWNLLFTILIIVTLFWLARFF) form a helical membrane-spanning segment. The Periplasmic portion of the chain corresponds to 27–107 (YVENSPVSKL…SGERSGSSSF (81 aa)). Residues 108 to 128 (WINVLGTLIPTILFIVVWLFI) form a helical membrane-spanning segment. Topologically, residues 129 to 610 (MRSLSGRNNQ…LSEEFEKVVE (482 aa)) are cytoplasmic. ATP is bound by residues glycine 164, 204–208 (GTGKT), leucine 209, histidine 343, and glutamate 371. Zn(2+) is bound at residue histidine 423. Glutamate 424 is a catalytic residue. Zn(2+) contacts are provided by histidine 427 and aspartate 500.

This sequence in the central section; belongs to the AAA ATPase family. It in the C-terminal section; belongs to the peptidase M41 family. In terms of assembly, the isolated ADP-bound cytosolic domain forms a 6-fold symmetric protease disk and a 2-fold symmetric AAA ATPase ring. In the absence of nucleotide the AAA ATPase ring also forms symmetric hexamers. Zn(2+) is required as a cofactor.

It is found in the cell inner membrane. In terms of biological role, acts as a processive, ATP-dependent zinc metallopeptidase for both cytoplasmic and membrane proteins. Plays a role in the quality control of integral membrane proteins. The protein is ATP-dependent zinc metalloprotease FtsH of Thermotoga maritima (strain ATCC 43589 / DSM 3109 / JCM 10099 / NBRC 100826 / MSB8).